A 378-amino-acid chain; its full sequence is MAKKVKKNEEITKKFGDERRKALDDALKNIEKDFGKGAVMRLGERAEQKVQVMSSGSLALDIALGAGGYPKGRIIEIYGPESSGKTTVALHAVAQAQKEGGIAAFIDAEHALDPAYAAALGVNIDELLLSQPDSGEQGLEIAGKLIDSGAVDLVVVDSVAALVPRAEIDGDIGDNHVGLQARMMSQAMRKLSASINKTKTIAIFINQLREKVGVMFGNPETTPGGRALKFYASVRLDVRGTTQIKGTGDQKDSSIGKETKIKVVKNKVAPPFKVAEVEIMYGEGISRTGELIKIASDLDIIQKAGAWFSYNGEKIGQGSENAKRYLADHPELFDEIDHKVRVKFGLLEDTEESAAADTVAAKADELVLELDDAIEIED.

Residue 79–86 participates in ATP binding; the sequence is GPESSGKT.

It belongs to the RecA family.

Its subcellular location is the cytoplasm. In terms of biological role, can catalyze the hydrolysis of ATP in the presence of single-stranded DNA, the ATP-dependent uptake of single-stranded DNA by duplex DNA, and the ATP-dependent hybridization of homologous single-stranded DNAs. It interacts with LexA causing its activation and leading to its autocatalytic cleavage. The protein is Protein RecA of Streptococcus equi subsp. zooepidemicus (strain H70).